A 505-amino-acid polypeptide reads, in one-letter code: MNLEAVKHAASLNEWSGLIPEIALGCLALLLLVVEMVLPKKRHDLIATIAIIGQFGILGWVAWDFHSPFLGRNDAFSGLLQFSYVGQAMRVFFLLSSIFVSILARVSLAKQQLPRIEFYHIVLVATAAMMLLAQANHFVLFFVALETLTVGLYILVSYFRTSPLSLEAGLKYLIMGALSSSLLLFGIVLLYGVAGNPALEGHTADPMNFAALTRFLALNPDNFLAAAGIVLVLSGIAFKIGAFPFQIWIPDVYQGAPTPTTAFLAVSSKAAGFAILLVLVNSVFGPYWWLVQPVLVAMAVATILFGNIAALTQHNVKRLIGLSGVSHAGFLLIGIIASHSVPSAVGAVLFYLFAYLLATFAVFGVMAHLAGADDAEQELDHYAGLAKEDPFLAAILAVALGSLAGIPPLAGFMGKLFVFIAAFKAGFYGLLAVAIVGVVISIYYYFGWIKAAFFETWTPPADAVNPRPARTPVGAAAGVALATLALCSILFGVYQGPLGAWLLAR.

A run of 14 helical transmembrane segments spans residues 18–38 (LIPEIALGCLALLLLVVEMVL), 45–65 (LIATIAIIGQFGILGWVAWDF), 84–104 (YVGQAMRVFFLLSSIFVSILA), 116–136 (IEFYHIVLVATAAMMLLAQAN), 138–158 (FVLFFVALETLTVGLYILVSY), 173–193 (LIMGALSSSLLLFGIVLLYGV), 223–243 (FLAAAGIVLVLSGIAFKIGAF), 271–291 (AGFAILLVLVNSVFGPYWWLV), 292–312 (QPVLVAMAVATILFGNIAALT), 319–339 (LIGLSGVSHAGFLLIGIIASH), 345–365 (VGAVLFYLFAYLLATFAVFGV), 391–411 (FLAAILAVALGSLAGIPPLAG), 429–449 (GLLAVAIVGVVISIYYYFGWI), and 473–493 (VGAAAGVALATLALCSILFGV).

This sequence belongs to the complex I subunit 2 family. In terms of assembly, NDH-1 is composed of 14 different subunits. Subunits NuoA, H, J, K, L, M, N constitute the membrane sector of the complex.

It is found in the cell inner membrane. The enzyme catalyses a quinone + NADH + 5 H(+)(in) = a quinol + NAD(+) + 4 H(+)(out). Functionally, NDH-1 shuttles electrons from NADH, via FMN and iron-sulfur (Fe-S) centers, to quinones in the respiratory chain. The immediate electron acceptor for the enzyme in this species is believed to be ubiquinone. Couples the redox reaction to proton translocation (for every two electrons transferred, four hydrogen ions are translocated across the cytoplasmic membrane), and thus conserves the redox energy in a proton gradient. In Opitutus terrae (strain DSM 11246 / JCM 15787 / PB90-1), this protein is NADH-quinone oxidoreductase subunit N 1.